Consider the following 197-residue polypeptide: Phosphoheptose isomerase (197 aa).

One can recognise an SIS domain in the interval Met-37–Met-197. Asn-52–Gly-54 is a binding site for substrate. The Zn(2+) site is built by His-61 and Glu-65. Substrate-binding positions include Glu-65, Asn-94–Asp-95, Ser-120–Ser-122, Ser-125, and Gln-175. 2 residues coordinate Zn(2+): Gln-175 and His-183.

The protein belongs to the SIS family. GmhA subfamily. In terms of assembly, homotetramer. The cofactor is Zn(2+).

The protein localises to the cytoplasm. It catalyses the reaction 2 D-sedoheptulose 7-phosphate = D-glycero-alpha-D-manno-heptose 7-phosphate + D-glycero-beta-D-manno-heptose 7-phosphate. It functions in the pathway carbohydrate biosynthesis; D-glycero-D-manno-heptose 7-phosphate biosynthesis; D-glycero-alpha-D-manno-heptose 7-phosphate and D-glycero-beta-D-manno-heptose 7-phosphate from sedoheptulose 7-phosphate: step 1/1. It participates in bacterial outer membrane biogenesis; LOS core biosynthesis. Its function is as follows. Catalyzes the isomerization of sedoheptulose 7-phosphate in D-glycero-D-manno-heptose 7-phosphate. The polypeptide is Phosphoheptose isomerase (Neisseria meningitidis serogroup A / serotype 4A (strain DSM 15465 / Z2491)).